Here is a 308-residue protein sequence, read N- to C-terminus: N-acetylmuramic acid 6-phosphate etherase (308 aa).

An SIS domain is found at 63–226 (IVDAFACGGR…STASMIRSGK (164 aa)). Glu91 (proton donor) is an active-site residue. The active site involves Glu122.

This sequence belongs to the GCKR-like family. MurNAc-6-P etherase subfamily. Homodimer.

The catalysed reaction is N-acetyl-D-muramate 6-phosphate + H2O = N-acetyl-D-glucosamine 6-phosphate + (R)-lactate. Its pathway is amino-sugar metabolism; 1,6-anhydro-N-acetylmuramate degradation. The protein operates within amino-sugar metabolism; N-acetylmuramate degradation. It participates in cell wall biogenesis; peptidoglycan recycling. Functionally, specifically catalyzes the cleavage of the D-lactyl ether substituent of MurNAc 6-phosphate, producing GlcNAc 6-phosphate and D-lactate. Together with AnmK, is also required for the utilization of anhydro-N-acetylmuramic acid (anhMurNAc) either imported from the medium or derived from its own cell wall murein, and thus plays a role in cell wall recycling. The polypeptide is N-acetylmuramic acid 6-phosphate etherase (Colwellia psychrerythraea (strain 34H / ATCC BAA-681) (Vibrio psychroerythus)).